The following is a 367-amino-acid chain: Anhydro-N-acetylmuramic acid kinase (367 aa).

11–18 (GTSLDGVD) lines the ATP pocket.

Belongs to the anhydro-N-acetylmuramic acid kinase family.

The catalysed reaction is 1,6-anhydro-N-acetyl-beta-muramate + ATP + H2O = N-acetyl-D-muramate 6-phosphate + ADP + H(+). It participates in amino-sugar metabolism; 1,6-anhydro-N-acetylmuramate degradation. Its pathway is cell wall biogenesis; peptidoglycan recycling. Catalyzes the specific phosphorylation of 1,6-anhydro-N-acetylmuramic acid (anhMurNAc) with the simultaneous cleavage of the 1,6-anhydro ring, generating MurNAc-6-P. Is required for the utilization of anhMurNAc either imported from the medium or derived from its own cell wall murein, and thus plays a role in cell wall recycling. This is Anhydro-N-acetylmuramic acid kinase from Rhodopseudomonas palustris (strain HaA2).